We begin with the raw amino-acid sequence, 383 residues long: Chitinase-3-like protein 1 (383 aa).

The signal sequence occupies residues 1 to 21 (MGVKASQTGFVVLVLLQCCSA). The region spanning 22–383 (YKLVCYYTSW…NAIKDALAAT (362 aa)) is the GH18 domain. An intrachain disulfide couples cysteine 26 to cysteine 51. Asparagine 60 is a glycosylation site (N-linked (GlcNAc...) asparagine). Residues 70–71 (EW), 97–100 (GGWN), tyrosine 141, 204–207 (MTYD), and arginine 263 contribute to the chitin site. Cysteine 300 and cysteine 364 are joined by a disulfide. Positions 324–338 (QWVGYDDQESVKSKV) are important for AKT1 activation and IL8 production. Residue tryptophan 352 participates in chitin binding.

This sequence belongs to the glycosyl hydrolase 18 family. In terms of assembly, monomer. Glycosylated. As to expression, present in activated macrophages, articular chondrocytes, synovial cells as well as in liver. Very low or undetectable expression in non-inflammatory colon. Undetectable in muscle tissues, lung, pancreas, mononuclear cells, or fibroblasts.

It is found in the secreted. It localises to the extracellular space. The protein localises to the cytoplasm. The protein resides in the perinuclear region. Its subcellular location is the endoplasmic reticulum. In terms of biological role, carbohydrate-binding lectin with a preference for chitin. Has no chitinase activity. May play a role in tissue remodeling and in the capacity of cells to respond to and cope with changes in their environment. Plays a role in T-helper cell type 2 (Th2) inflammatory response and IL-13-induced inflammation, regulating allergen sensitization, inflammatory cell apoptosis, dendritic cell accumulation and M2 macrophage differentiation. Facilitates invasion of pathogenic enteric bacteria into colonic mucosa and lymphoid organs. Mediates activation of AKT1 signaling pathway and subsequent IL8 production in colonic epithelial cells. Regulates antibacterial responses in lung by contributing to macrophage bacterial killing, controlling bacterial dissemination and augmenting host tolerance. Also regulates hyperoxia-induced injury, inflammation and epithelial apoptosis in lung. This is Chitinase-3-like protein 1 (CHI3L1) from Homo sapiens (Human).